The following is a 108-amino-acid chain: FK506-binding protein 1 (108 aa).

One can recognise a PPIase FKBP-type domain in the interval 20–108 (GDSVTIHYVG…KFEVELLKIN (89 aa)).

It belongs to the FKBP-type PPIase family. FKBP1 subfamily.

It localises to the cytoplasm. The catalysed reaction is [protein]-peptidylproline (omega=180) = [protein]-peptidylproline (omega=0). Inhibited by both FK506 and rapamycin. In terms of biological role, PPIases accelerate the folding of proteins. It catalyzes the cis-trans isomerization of proline imidic peptide bonds in oligopeptides. In Cryptococcus neoformans var. neoformans serotype D (strain JEC21 / ATCC MYA-565) (Filobasidiella neoformans), this protein is FK506-binding protein 1 (FPR1).